The following is a 331-amino-acid chain: Tetraacyldisaccharide 4'-kinase (331 aa).

58-65 is a binding site for ATP; that stretch reads TVGGSGKT.

This sequence belongs to the LpxK family.

The enzyme catalyses a lipid A disaccharide + ATP = a lipid IVA + ADP + H(+). It participates in glycolipid biosynthesis; lipid IV(A) biosynthesis; lipid IV(A) from (3R)-3-hydroxytetradecanoyl-[acyl-carrier-protein] and UDP-N-acetyl-alpha-D-glucosamine: step 6/6. In terms of biological role, transfers the gamma-phosphate of ATP to the 4'-position of a tetraacyldisaccharide 1-phosphate intermediate (termed DS-1-P) to form tetraacyldisaccharide 1,4'-bis-phosphate (lipid IVA). In Shewanella denitrificans (strain OS217 / ATCC BAA-1090 / DSM 15013), this protein is Tetraacyldisaccharide 4'-kinase.